We begin with the raw amino-acid sequence, 251 residues long: MLDLLRLQLTTFIMNDVPTPYACYFQDSATPNQEGILELHDNIMFYLLVILGLVSWMLYTIVMTYSKNPIAYKYIKHGQTIEVIWTIFPAVILLIIAFPSFILLYLCDEVISPAMTIKAIGYQWYWKYEYSDFINDSGETVEFESYVIPDELLEEGQLRLLDTDTSMVVPVDTHIRFVVTAADVIHDFAIPSLGIKVDATPGRLNQVSALIQREGVFYGACSELCGTGHANMPIKIEAVSLPKFLEWLNEQ.

Residues 1–15 constitute a propeptide, removed in mature form; that stretch reads MLDLLRLQLTTFIMN. At 16–30 the chain is on the mitochondrial intermembrane side; sequence DVPTPYACYFQDSAT. A helical transmembrane segment spans residues 31–64; that stretch reads PNQEGILELHDNIMFYLLVILGLVSWMLYTIVMT. At 65 to 78 the chain is on the mitochondrial matrix side; that stretch reads YSKNPIAYKYIKHG. The chain crosses the membrane as a helical span at residues 79–108; it reads QTIEVIWTIFPAVILLIIAFPSFILLYLCD. Residues 109–251 are Mitochondrial intermembrane-facing; the sequence is EVISPAMTIK…PKFLEWLNEQ (143 aa). Cu cation contacts are provided by His-186, Cys-221, Glu-223, Cys-225, His-229, and Met-232. Glu-223 provides a ligand contact to Mg(2+).

It belongs to the cytochrome c oxidase subunit 2 family. As to quaternary structure, component of the cytochrome c oxidase (complex IV, CIV), a multisubunit enzyme composed of 12 subunits. The complex is composed of a catalytic core of 3 subunits COX1, COX2 and COX3, encoded in the mitochondrial DNA, and 9 supernumerary subunits COX4, COX5A (or COX5B), COX6, COX7, COX8, COX9, COX12, COX13 and COX26, which are encoded in the nuclear genome. The complex exists as a monomer or a dimer and forms supercomplexes (SCs) in the inner mitochondrial membrane with a dimer of ubiquinol-cytochrome c oxidoreductase (cytochrome b-c1 complex, complex III, CIII), resulting in 2 different assemblies (supercomplexes III(2)IV and III(2)IV(2)). The cofactor is Cu cation. Post-translationally, the N-terminal sequence of COX2 is processed by IMP1.

It is found in the mitochondrion inner membrane. The catalysed reaction is 4 Fe(II)-[cytochrome c] + O2 + 8 H(+)(in) = 4 Fe(III)-[cytochrome c] + 2 H2O + 4 H(+)(out). In terms of biological role, component of the cytochrome c oxidase, the last enzyme in the mitochondrial electron transport chain which drives oxidative phosphorylation. The respiratory chain contains 3 multisubunit complexes succinate dehydrogenase (complex II, CII), ubiquinol-cytochrome c oxidoreductase (cytochrome b-c1 complex, complex III, CIII) and cytochrome c oxidase (complex IV, CIV), that cooperate to transfer electrons derived from NADH and succinate to molecular oxygen, creating an electrochemical gradient over the inner membrane that drives transmembrane transport and the ATP synthase. Cytochrome c oxidase is the component of the respiratory chain that catalyzes the reduction of oxygen to water. Electrons originating from reduced cytochrome c in the intermembrane space (IMS) are transferred via the dinuclear copper A center (CU(A)) of COX2 and heme A of COX1 to the active site in COX1, a binuclear center (BNC) formed by heme A3 and copper B (CU(B)). The BNC reduces molecular oxygen to 2 water molecules unsing 4 electrons from cytochrome c in the IMS and 4 protons from the mitochondrial matrix. COX2 is a catalytic core subunit which transfers the electrons from cytochrome c via its dinuclear copper A center (CU(A)) to the BNC of the COX1. This Saccharomyces cerevisiae (strain ATCC 204508 / S288c) (Baker's yeast) protein is Cytochrome c oxidase subunit 2 (COX2).